We begin with the raw amino-acid sequence, 438 residues long: MLDLEIVPEISLGCDAWEFVLGMHFSQAIAIIQSQVGIIKGVQVLYSDTTPLGVDIIINLPQDGVRLIFDPVSQRLKTIEVFNMKLVKLRYFGVYFNSPEVLPSIEQIEHSFGATHPGVYDAAKQLFALHFRGLSFYFPVDSKLHSGYAHGLSSLVFLNGASPVVSKMSLYAGSNVLENRVPSLPLSCYHRQMYLESATVLRTAFGHTKGLKLKLFTEGSGRALEPRRQCFTRELLFGDSCEDVATSLGAPNRIFFKSEDKMKIHSSSVNRQAQSKRSDIFFNYFTLGIDVLFDARTQTCKKFILHTNYPGHFNFNMYHRCEFQFLLQADHPSMSDSGHDLVTPTKQEHVNITAYTKWDAISSALATSERPVVLHRASSTNTANPFGSTFCYGYQDLIFEVMPNSHIASVTLYNTAPPRQPAHSWQQHKMQDIRLTVA.

The protein belongs to the PHAF1 family.

Its subcellular location is the cytoplasm. The protein localises to the preautophagosomal structure. In terms of biological role, may play a regulatory role in autophagic activity. The sequence is that of PHAF1 protein CG7083 from Drosophila melanogaster (Fruit fly).